The sequence spans 600 residues: Baculoviral IAP repeat-containing protein 3 (600 aa).

A BIR 1 repeat occupies 27–94; sequence ELYRLSTYSA…RKLYPSCNFV (68 aa). Ser-138 is modified (phosphoserine). BIR repeat units follow at residues 167-233 and 253-320; these read EKAR…CPFL and HAAR…CEYL. Zn(2+) contacts are provided by Cys-290, Cys-293, His-310, and Cys-317. Residues 436–525 form the CARD domain; the sequence is EESDDLALIR…ALYRDIFVQQ (90 aa). The RING-type zinc finger occupies 553-588; it reads CKVCMDREVSIVFIPCGHLVVCKDCAPSLRKCPICR.

The protein belongs to the IAP family. In terms of assembly, interacts with PRSS25; the interaction inhibits apoptotic suppressor activity. The BIR motifs region interacts with TNF receptor associated factors 1 and 2 (TRAF1 and TRAF2) to form a heteromeric complex, which is then recruited to the tumor necrosis factor receptor 2 (TNFR2). Interaction with TRAF2 is required for ubiquitination of IKBKE, degradation of NFKBIA and activation of NF-kappa-B. Interacts with RIP1, RIP2, RIP3, RIP4 and USP19. Post-translationally, auto-ubiquitinated and degraded by the proteasome in apoptotic cells.

Its subcellular location is the cytoplasm. The protein localises to the nucleus. It catalyses the reaction S-ubiquitinyl-[E2 ubiquitin-conjugating enzyme]-L-cysteine + [acceptor protein]-L-lysine = [E2 ubiquitin-conjugating enzyme]-L-cysteine + N(6)-ubiquitinyl-[acceptor protein]-L-lysine.. Its activity is regulated as follows. USP19 regulates the stability of BIRC3/c-IAP2 by preventing its ubiquitination. Its function is as follows. Multi-functional protein which regulates not only caspases and apoptosis, but also modulates inflammatory signaling and immunity, mitogenic kinase signaling and cell proliferation, as well as cell invasion and metastasis. Acts as an E3 ubiquitin-protein ligase regulating NF-kappa-B signaling and regulates both canonical and non-canonical NF-kappa-B signaling by acting in opposite directions: acts as a positive regulator of the canonical pathway and suppresses constitutive activation of non-canonical NF-kappa-B signaling. The target proteins for its E3 ubiquitin-protein ligase activity include: RIPK1, RIPK2, RIPK3, RIPK4, CASP3, CASP7, CASP8, IKBKE, TRAF1, and BCL10. Acts as an important regulator of innate immune signaling via regulation of Toll-like receptors (TLRs), Nodlike receptors (NLRs) and RIG-I like receptors (RLRs), collectively referred to as pattern recognition receptors (PRRs). Protects cells from spontaneous formation of the ripoptosome, a large multi-protein complex that has the capability to kill cancer cells in a caspase-dependent and caspase-independent manner. Suppresses ripoptosome formation by ubiquitinating RIPK1 and CASP8. The protein is Baculoviral IAP repeat-containing protein 3 (Birc3) of Mus musculus (Mouse).